A 609-amino-acid polypeptide reads, in one-letter code: UvrABC system protein C (609 aa).

A GIY-YIG domain is found at 13–91; sequence HEPGVYRMYD…IKLYQPRYNV (79 aa). Positions 201 to 236 constitute a UVR domain; the sequence is QQVLDYLIGKMEQASRNLDFEQAARYRDQIQAVRSV.

Belongs to the UvrC family. Interacts with UvrB in an incision complex.

It localises to the cytoplasm. The UvrABC repair system catalyzes the recognition and processing of DNA lesions. UvrC both incises the 5' and 3' sides of the lesion. The N-terminal half is responsible for the 3' incision and the C-terminal half is responsible for the 5' incision. This chain is UvrABC system protein C, found in Haemophilus influenzae (strain ATCC 51907 / DSM 11121 / KW20 / Rd).